Reading from the N-terminus, the 404-residue chain is Bifunctional enzyme IspD/IspF (404 aa).

Residues 1-243 (MQAEEQFSCG…KLTRMAIPDV (243 aa)) are 2-C-methyl-D-erythritol 4-phosphate cytidylyltransferase. Positions 244-404 (RTGNGYDVHQ…TVVYASGGDA (161 aa)) are 2-C-methyl-D-erythritol 2,4-cyclodiphosphate synthase. A divalent metal cation is bound by residues D250 and H252. Residues 250-252 (DVH) and 276-277 (HS) contribute to the 4-CDP-2-C-methyl-D-erythritol 2-phosphate site. A divalent metal cation is bound at residue H284. 4-CDP-2-C-methyl-D-erythritol 2-phosphate is bound by residues 298–300 (DIG), 374–377 (TTNE), F381, and R384.

This sequence in the N-terminal section; belongs to the IspD/TarI cytidylyltransferase family. IspD subfamily. In the C-terminal section; belongs to the IspF family. The cofactor is a divalent metal cation.

The enzyme catalyses 2-C-methyl-D-erythritol 4-phosphate + CTP + H(+) = 4-CDP-2-C-methyl-D-erythritol + diphosphate. It carries out the reaction 4-CDP-2-C-methyl-D-erythritol 2-phosphate = 2-C-methyl-D-erythritol 2,4-cyclic diphosphate + CMP. Its pathway is isoprenoid biosynthesis; isopentenyl diphosphate biosynthesis via DXP pathway; isopentenyl diphosphate from 1-deoxy-D-xylulose 5-phosphate: step 2/6. The protein operates within isoprenoid biosynthesis; isopentenyl diphosphate biosynthesis via DXP pathway; isopentenyl diphosphate from 1-deoxy-D-xylulose 5-phosphate: step 4/6. In terms of biological role, bifunctional enzyme that catalyzes the formation of 4-diphosphocytidyl-2-C-methyl-D-erythritol from CTP and 2-C-methyl-D-erythritol 4-phosphate (MEP) (IspD), and catalyzes the conversion of 4-diphosphocytidyl-2-C-methyl-D-erythritol 2-phosphate (CDP-ME2P) to 2-C-methyl-D-erythritol 2,4-cyclodiphosphate (ME-CPP) with a corresponding release of cytidine 5-monophosphate (CMP) (IspF). The chain is Bifunctional enzyme IspD/IspF from Sinorhizobium medicae (strain WSM419) (Ensifer medicae).